A 937-amino-acid polypeptide reads, in one-letter code: Inactive tyrosine-protein kinase transmembrane receptor ROR1 (937 aa).

The first 29 residues, 1 to 29 (MHRPRRRGTRPPPLALLAALLLAARGADA), serve as a signal peptide directing secretion. Over 30 to 406 (QETELSVSAE…KEKNKMEILY (377 aa)) the chain is Extracellular. In terms of domain architecture, Ig-like C2-type spans 42 to 141 (PTSSWNTSSE…VATNGKKVVS (100 aa)). Residues Asn47 and Asn66 are each glycosylated (N-linked (GlcNAc...) asparagine). 9 cysteine pairs are disulfide-bonded: Cys79-Cys131, Cys170-Cys235, Cys178-Cys228, Cys219-Cys260, Cys248-Cys296, Cys252-Cys282, Cys313-Cys391, Cys334-Cys374, and Cys362-Cys386. Residues 165 to 299 (EEDGFCQPYR…SPEAANCIRI (135 aa)) form the FZ domain. The N-linked (GlcNAc...) asparagine glycan is linked to Asn184. A Kringle domain is found at 312–391 (KCYNSTGVDY…KSDLCDIPAC (80 aa)). N-linked (GlcNAc...) asparagine glycosylation is present at Asn315. A helical transmembrane segment spans residues 407–427 (ILVPSVAIPLAIAFLFFFICV). Residues 428–937 (CRNNQKSSSP…HTESMISAEV (510 aa)) are Cytoplasmic-facing. Residues 473 to 746 (VRFMEELGEC…PRFKDIHVRL (274 aa)) form the Protein kinase domain. ATP-binding positions include 479–487 (LGECTFGKI) and Lys506. Tyr645 carries the phosphotyrosine; by autocatalysis modification. Over residues 753–762 (SSHTSSTTPS) the composition is skewed to low complexity. 3 disordered regions span residues 753–778 (SSHT…ASPV), 840–890 (GPPR…HMSI), and 916–937 (QSSL…SAEV). The span at 763 to 778 (GGNATTQTTSLSASPV) shows a compositional bias: polar residues. The span at 854-864 (RSPSSASGSTS) shows a compositional bias: low complexity. Polar residues predominate over residues 865-880 (TGHVASLPSSGSNQEA).

The protein belongs to the protein kinase superfamily. Tyr protein kinase family. ROR subfamily. As to quaternary structure, interacts with ERBB2 and IGFBP5. In terms of tissue distribution, at postnatal P0, expressed in heart, lung, liver, kidney, spleen and inner ear.

The protein resides in the membrane. It is found in the cell projection. It localises to the axon. In terms of biological role, has very low kinase activity in vitro and is unlikely to function as a tyrosine kinase in vivo. Receptor for ligand WNT5A which activate downstream NFkB signaling pathway and may result in the inhibition of WNT3A-mediated signaling. In inner ear, crucial for spiral ganglion neurons to innervate auditory hair cells. Via IGFBP5 ligand, forms a complex with ERBB2 to enhance CREB oncogenic signaling. The sequence is that of Inactive tyrosine-protein kinase transmembrane receptor ROR1 (Ror1) from Mus musculus (Mouse).